Consider the following 515-residue polypeptide: N-acetylglucosamine-1-phosphodiester alpha-N-acetylglucosaminidase (515 aa).

Residues 1–25 (MATSTGRWLLLRLALFGFLWEASGG) form the signal peptide. A propeptide spans 26–49 (LDSGASRDDDLLLPYPRARARLPR) (removed in mature form). The Lumenal segment spans residues 50–448 (DCTRVRAGNR…AGELSFFTRT (399 aa)). 5 disulfide bridges follow: cysteine 115–cysteine 148, cysteine 132–cysteine 323, cysteine 307–cysteine 314, cysteine 362–cysteine 373, and cysteine 380–cysteine 389. N-linked (GlcNAc...) asparagine glycosylation is found at asparagine 208, asparagine 214, and asparagine 296. In terms of domain architecture, EGF-like spans 358 to 390 (DELDCGPSNCSQHGLCTETGCRCDAGWTGSNCS). N-linked (GlcNAc...) asparagine glycosylation is found at asparagine 366, asparagine 388, and asparagine 420. A helical transmembrane segment spans residues 449–469 (AWLALTLALAFLLLISTAANL). The Cytoplasmic portion of the chain corresponds to 470–515 (SLLLSRAERNRRLHGDYAYHPLQEMNGEPLAAEKEQPGGAHNPFKD). Residues 486–493 (YAYHPLQE) are mediates the interaction with AP4M1. A Tyrosine-based internalization motif motif is present at residues 488–491 (YHPL). The short motif at 511–515 (NPFKD) is the NPF internalization motif element.

Homotetramer arranged as two disulfide-linked homodimers. Interacts with AP4M1. In terms of processing, the precursor is cleaved and activated in the trans-Golgi network by a furin endopeptidase. As to expression, isoform 2 may be brain-specific.

The protein localises to the golgi apparatus. It is found in the golgi stack membrane. It localises to the trans-Golgi network. The enzyme catalyses N(4)-[6-(N-acetyl-alpha-D-glucosaminyl-1-phospho)-alpha-D-mannosyl-(1-&gt;2)-alpha-D-mannosyl-(glycan)]-L-asparaginyl-[protein] + H2O = N(4)-[6-phospho-alpha-D-mannosyl-(1-&gt;2)-alpha-D-mannosyl-(glycan)]-L-asparaginyl-[protein] + N-acetyl-D-glucosamine + H(+). The protein operates within protein modification; protein glycosylation. Its function is as follows. Catalyzes the second step in the formation of the mannose 6-phosphate targeting signal on lysosomal enzyme oligosaccharides by removing GlcNAc residues from GlcNAc-alpha-P-mannose moieties, which are formed in the first step. Also hydrolyzes UDP-GlcNAc, a sugar donor for Golgi N-acetylglucosaminyltransferases. The polypeptide is N-acetylglucosamine-1-phosphodiester alpha-N-acetylglucosaminidase (NAGPA) (Homo sapiens (Human)).